Consider the following 214-residue polypeptide: Adenylate kinase (214 aa).

11-16 is a binding site for ATP; that stretch reads GTGKGT. Positions 31 to 61 are NMP; it reads SSGDLFRFYAKEEKTALAEEIKSYINNGLYV. Residues serine 32, arginine 37, 59-61, 87-90, and glutamine 94 contribute to the AMP site; these read LYV and GYPR. The tract at residues 124-163 is LID; sequence LRRSCPQCKRIYNINSVDFKPKVANLCDLCKVELIHRKDD. Residue arginine 125 coordinates ATP. Zn(2+) is bound by residues cysteine 128 and cysteine 131. 134 to 135 is a binding site for ATP; sequence IY. Zn(2+) is bound by residues cysteine 150 and cysteine 153. Residues arginine 160 and arginine 171 each contribute to the AMP site. An ATP-binding site is contributed by lysine 199.

It belongs to the adenylate kinase family. As to quaternary structure, monomer.

The protein resides in the cytoplasm. It catalyses the reaction AMP + ATP = 2 ADP. The protein operates within purine metabolism; AMP biosynthesis via salvage pathway; AMP from ADP: step 1/1. Its function is as follows. Catalyzes the reversible transfer of the terminal phosphate group between ATP and AMP. Plays an important role in cellular energy homeostasis and in adenine nucleotide metabolism. The polypeptide is Adenylate kinase (Mycoplasmoides gallisepticum (strain R(low / passage 15 / clone 2)) (Mycoplasma gallisepticum)).